Consider the following 513-residue polypeptide: Putative ATP-dependent RNA helicase QP509L (513 aa).

Positions 110-262 (KKLLSPYGRF…KIIIHHLGQP (153 aa)) constitute a Helicase ATP-binding domain. 123 to 130 (LNTGLGKT) contacts ATP. The DEAH box signature appears at 215-218 (DEAH).

It belongs to the DEAD box helicase family. DEAH subfamily.

The enzyme catalyses ATP + H2O = ADP + phosphate + H(+). This African swine fever virus (isolate Tick/South Africa/Pretoriuskop Pr4/1996) (ASFV) protein is Putative ATP-dependent RNA helicase QP509L.